We begin with the raw amino-acid sequence, 309 residues long: MSAKIIRIATRQSPLALWQANHVREMLVKQWPNLSIELLPMITSGDRFLKDKLLSAGGKGLFVKELEEALLDKRADLAVHSTKDMPAQLPDGLSLAAICKRDNPFDALISPRFKSLDALPKNAIIGTSSLRRQSQLLAYNPNLQIKTLRGNIHTRLSKLESGEYQAIILAAAGLERMGLAHHITQLIPDDIMLPTCAQGALCIECRTDDLEIQELIHGLNDPISALCVHTERRVNAKLGGNCHIPFAVYCTITAEKLLLLRAKVLNLDGSQMIDDEQQGKIEEAEIIADRCTESLMTKGAMSLLSTIPS.

Residue Cys-242 is modified to S-(dipyrrolylmethanemethyl)cysteine.

This sequence belongs to the HMBS family. In terms of assembly, monomer. Dipyrromethane serves as cofactor.

The catalysed reaction is 4 porphobilinogen + H2O = hydroxymethylbilane + 4 NH4(+). The protein operates within porphyrin-containing compound metabolism; protoporphyrin-IX biosynthesis; coproporphyrinogen-III from 5-aminolevulinate: step 2/4. In terms of biological role, tetrapolymerization of the monopyrrole PBG into the hydroxymethylbilane pre-uroporphyrinogen in several discrete steps. The protein is Porphobilinogen deaminase of Legionella pneumophila (strain Paris).